A 790-amino-acid polypeptide reads, in one-letter code: Kinesin-like protein KIF9 (790 aa).

The Kinesin motor domain maps to 6–340 (KVQAFVRVRP…LRFASRMKLV (335 aa)). ATP contacts are provided by residues 12–14 (RVR) and 93–100 (GQTGAGKT). Positions 342 to 442 (TEPAINEKYD…EQEVESALRR (101 aa)) form a coiled coil. The interval 482–521 (GVAPFSVKPGKKPKTKKTPKDQFSSSARKEGASSPVSGKD) is disordered. Threonine 530 is modified (phosphothreonine). The segment at 547 to 577 (RERETSSIEPLISDSPKEELRAPRPSTPPSR) is disordered. Residues 600 to 695 (KSILNERKKR…YCQRLVDQCR (96 aa)) are a coiled coil.

The protein belongs to the TRAFAC class myosin-kinesin ATPase superfamily. Kinesin family. Interacts with HYDIN. As to expression, highly expressed in the testis (at protein level). Weakly expressed in the brain, thymus, lung and heart.

The protein localises to the cytoplasm. Its subcellular location is the cytoskeleton. It is found in the cell projection. It localises to the cilium. The protein resides in the flagellum. The protein localises to the flagellum axoneme. Essential for normal male fertility and for progressive motility of spermatozoa. This is Kinesin-like protein KIF9 (Kif9) from Mus musculus (Mouse).